The sequence spans 487 residues: Dihydrofolate synthase/folylpolyglutamate synthase (487 aa).

Residue 44–46 (DPS) coordinates 7,8-dihydropteroate. An ATP-binding site is contributed by 74–77 (GKTS). 2 residues coordinate Mg(2+): threonine 76 and serine 98. 150 to 153 (SKFE) contacts 7,8-dihydropteroate. Residue glutamate 174 participates in Mg(2+) binding. 181 to 183 (WDA) contributes to the 7,8-dihydropteroate binding site. Positions 201 and 203 each coordinate Mg(2+). Residues asparagine 301, arginine 338, and 351-354 (DAAH) each bind ATP. Aspartate 384 serves as a coordination point for Mg(2+).

The protein belongs to the folylpolyglutamate synthase family. In terms of assembly, monomer. The cofactor is Mg(2+).

It carries out the reaction 7,8-dihydropteroate + L-glutamate + ATP = 7,8-dihydrofolate + ADP + phosphate + H(+). The enzyme catalyses (6S)-5,6,7,8-tetrahydrofolyl-(gamma-L-Glu)(n) + L-glutamate + ATP = (6S)-5,6,7,8-tetrahydrofolyl-(gamma-L-Glu)(n+1) + ADP + phosphate + H(+). It functions in the pathway cofactor biosynthesis; tetrahydrofolate biosynthesis; 7,8-dihydrofolate from 2-amino-4-hydroxy-6-hydroxymethyl-7,8-dihydropteridine diphosphate and 4-aminobenzoate: step 2/2. The protein operates within cofactor biosynthesis; tetrahydrofolylpolyglutamate biosynthesis. Catalyzes the addition of a glutamate residue to dihydropteroate (7,8-dihydropteroate or H2Pte) to form dihydrofolate (7,8-dihydrofolate monoglutamate or H2Pte-Glu). Also catalyzes successive additions of L-glutamate to tetrahydrofolate, leading to folylpolyglutamate derivatives. Functionally, is involved in the bioactivation of the antituberculous drug para-aminosalicylic acid (PAS). Is able to use hydroxy-dihydropteroate (H2PtePAS) as substrate, which is the product formed by the action of DHPS (FolP1) on PAS, leading to hydroxy-dihydrofolate (H2PtePAS-Glu). This compound inhibits dihydrofolate reductase DHFR (DfrA), the next enzyme in the folate pathway, and thus disrupts the folate-dependent metabolic pathways. The chain is Dihydrofolate synthase/folylpolyglutamate synthase from Mycobacterium tuberculosis (strain ATCC 25618 / H37Rv).